Consider the following 212-residue polypeptide: Transcriptional repressor CcpN (212 aa).

The HTH deoR-type domain maps to 6–70 (LNKRQEHILQ…FYTGKTGTQL (65 aa)). A DNA-binding region (H-T-H motif) is located at residues 23 to 42 (ITGEHIAEKLNLTRATLRPD). CBS domains lie at 83 to 139 (FQSI…QQEL) and 148 to 211 (MTRM…ENEI).

Transcription repressor that binds to the promoter of gapB and pckA genes, preventing their expression. Acts as a regulator for catabolite repression of gluconeogenic genes. The protein is Transcriptional repressor CcpN (ccpN) of Bacillus subtilis (strain 168).